Consider the following 256-residue polypeptide: Deoxyribose-phosphate aldolase (256 aa).

The Proton donor/acceptor role is filled by Asp102. Lys165 acts as the Schiff-base intermediate with acetaldehyde in catalysis. The active-site Proton donor/acceptor is the Lys197.

The protein belongs to the DeoC/FbaB aldolase family. DeoC type 2 subfamily.

The protein resides in the cytoplasm. It carries out the reaction 2-deoxy-D-ribose 5-phosphate = D-glyceraldehyde 3-phosphate + acetaldehyde. The protein operates within carbohydrate degradation; 2-deoxy-D-ribose 1-phosphate degradation; D-glyceraldehyde 3-phosphate and acetaldehyde from 2-deoxy-alpha-D-ribose 1-phosphate: step 2/2. Functionally, catalyzes a reversible aldol reaction between acetaldehyde and D-glyceraldehyde 3-phosphate to generate 2-deoxy-D-ribose 5-phosphate. In Shewanella baltica (strain OS223), this protein is Deoxyribose-phosphate aldolase.